The sequence spans 132 residues: Protein p15 (132 aa).

Functionally, may play a role in infectivity. This Panicum mosaic virus (strain United States/Kansas 109S) (PMV) protein is Protein p15.